The sequence spans 220 residues: Response regulator protein TmoT (220 aa).

The region spanning 21 to 135 is the Response regulatory domain; it reads VIYIVDDDNA…DLLGAIRTAL (115 aa). A 4-aspartylphosphate modification is found at Asp-70. One can recognise an HTH luxR-type domain in the interval 151–216; it reads LKASYESLSK…DLVRVTERLK (66 aa). Positions 175–194 form a DNA-binding region, H-T-H motif; it reads NKQTALELDISEATVKVHRH.

In terms of processing, phosphorylated by TmoS.

Its subcellular location is the cytoplasm. Functionally, member of the two-component regulatory system TmoS/TmoT involved in the regulation of toluene degradation. Induces expression of tmoX operon. The sequence is that of Response regulator protein TmoT (tmoT) from Ectopseudomonas mendocina (Pseudomonas mendocina).